The chain runs to 1872 residues: Histone acetyltransferase KAT6B (1872 aa).

Positions 1–77 (MVKLANPLYT…LASYKDPDNP (77 aa)) constitute an SAMD1-like winged helix (WH) domain. Disordered regions lie at residues 70–103 (SYKD…CNDL) and 168–207 (KEGP…HEKD). In terms of domain architecture, H15 spans 104-177 (RNVDWNKLLK…KEGPQYRVNS (74 aa)). Over residues 189-202 (PSAFPSSLPPVSLL) the composition is skewed to low complexity. 2 PHD-type zinc fingers span residues 214–273 (IPIC…CKTC) and 270–321 (CKTC…CRPK). Ser356 carries the post-translational modification Phosphoserine. The disordered stretch occupies residues 361–417 (EGSMSAFTGRGSPGRGQKTKVSTTPSSGHAASGKHSSSRLAVTDPTRPGATTKTTTS). A negatively regulates HAT activity region spans residues 362–535 (GSMSAFTGRG…ECESGVEDCG (174 aa)). Positions 386–395 (SSGHAASGKH) are enriched in low complexity. A Glycyl lysine isopeptide (Lys-Gly) (interchain with G-Cter in SUMO2) cross-link involves residue Lys491. The MYST-type HAT domain maps to 533–807 (DCGRYPSVIE…LDPESLRWTP (275 aa)). A catalytic region spans residues 536 to 826 (RYPSVIEFGK…EEEREAEKEA (291 aa)). The C2HC MYST-type zinc finger occupies 566-591 (LYLCEFCLKYMKSKNILLRHSKKCGW). The interaction with BRPF1 stretch occupies residues 570–826 (EFCLKYMKSK…EEEREAEKEA (257 aa)). Position 633 is an N6-acetyllysine; by autocatalysis (Lys633). Residues 674 to 678 (SCIMI) and 683 to 689 (QRQGFGR) each bind acetyl-CoA. Glu709 (proton donor/acceptor) is an active-site residue. Ser713 serves as a coordination point for acetyl-CoA. A compositionally biased stretch (low complexity) spans 846-860 (SRVSSRQSSAKVQSK). Disordered stretches follow at residues 846-1018 (SRVS…NHFF), 1031-1252 (DAEH…FKDA), 1283-1358 (MSCN…DDTF), and 1388-1418 (DECQ…SPSV). 3 positions are modified to N6-acetyllysine: Lys856, Lys860, and Lys862. At Ser866 the chain carries Phosphoserine. Over residues 887 to 909 (SEEEEEEEEEDDEEEEEEEEEES) the composition is skewed to acidic residues. Residues 910 to 924 (IQTSPPRLTKPQSVS) show a composition bias toward polar residues. Residues 925 to 944 (IKRKRPFVVKKKRGRKRRRI) show a composition bias toward basic residues. Residues 946-959 (SSVTTETISETTEV) are compositionally biased toward low complexity. Residues 991 to 1004 (PVLRKAFPHQPGKK) show a composition bias toward basic residues. Composition is skewed to basic and acidic residues over residues 1031 to 1047 (DAEH…EPLK) and 1094 to 1114 (EEQK…REVT). A compositionally biased stretch (acidic residues) spans 1155–1176 (EEGEEEGEEEGEREEQEEEEEV). Basic and acidic residues predominate over residues 1177–1207 (TTEKDLDGAKSKENPEPEISMEKEDPVHLGD). Acidic residues predominate over residues 1208-1217 (HEEDEDEEEE). Basic and acidic residues-rich tracts occupy residues 1238–1252 (NMER…FKDA) and 1310–1320 (QTQKQDQKNSD). Over residues 1339 to 1349 (ETAQAVQSLTQ) the composition is skewed to polar residues. The interval 1359–1872 (PDCAETQEAC…QSLNGSYMRR (514 aa)) is interaction with RUNX1 and RUNX2. Positions 1393-1410 (SDHSSPVSSVHSHPGQSV) are enriched in low complexity.

This sequence belongs to the MYST (SAS/MOZ) family. As to quaternary structure, component of the MOZ/MORF complex composed at least of ING5, KAT6A, KAT6B, MEAF6 and one of BRPF1, BRD1/BRPF2 and BRPF3. Interacts with RUNX1 and RUNX2. Autoacetylation at Lys-633 is required for proper function. In terms of tissue distribution, ubiquitously expressed.

It is found in the nucleus. The catalysed reaction is L-lysyl-[protein] + acetyl-CoA = N(6)-acetyl-L-lysyl-[protein] + CoA + H(+). In terms of biological role, histone acetyltransferase which may be involved in both positive and negative regulation of transcription. Required for RUNX2-dependent transcriptional activation. Component of the MOZ/MORF complex which has a histone H3 acetyltransferase activity. Involved in cerebral cortex development. This is Histone acetyltransferase KAT6B (Kat6b) from Mus musculus (Mouse).